A 91-amino-acid polypeptide reads, in one-letter code: Acylphosphatase (91 aa).

Residues 5–91 form the Acylphosphatase-like domain; sequence WKKWNVRGVV…QEYKDFHVEF (87 aa). Active-site residues include arginine 20 and asparagine 38.

Belongs to the acylphosphatase family.

It catalyses the reaction an acyl phosphate + H2O = a carboxylate + phosphate + H(+). This Fervidobacterium nodosum (strain ATCC 35602 / DSM 5306 / Rt17-B1) protein is Acylphosphatase (acyP).